We begin with the raw amino-acid sequence, 478 residues long: Hexokinase (478 aa).

The Hexokinase domain occupies 21-465; sequence EYLLKELTEL…LGAGAAIIAA (445 aa). The tract at residues 75-208 is hexokinase small subdomain; it reads TGKEMGDYLA…KVPIEVVALI (134 aa). Residue Lys-111 coordinates ATP. The glucose-binding stretch occupies residues 151–177; it reads PLGFTFSYPASQGSINEGYLQRWTKGF. The interval 209 to 454 is hexokinase large subdomain; sequence NDTTGTLVAS…DPIVIVPAED (246 aa).

The protein belongs to the hexokinase family. As to quaternary structure, monomer.

It catalyses the reaction a D-hexose + ATP = a D-hexose 6-phosphate + ADP + H(+). It carries out the reaction D-fructose + ATP = D-fructose 6-phosphate + ADP + H(+). The enzyme catalyses D-glucose + ATP = D-glucose 6-phosphate + ADP + H(+). It participates in carbohydrate metabolism; hexose metabolism. The protein operates within carbohydrate degradation; glycolysis; D-glyceraldehyde 3-phosphate and glycerone phosphate from D-glucose: step 1/4. Catalyzes the phosphorylation of hexose, such as D-glucose and D-fructose, to hexose 6-phosphate (D-glucose 6-phosphate and D-fructose 6-phosphate, respectively). Mediates the initial step of glycolysis by catalyzing phosphorylation of D-glucose to D-glucose 6-phosphate. This Schwanniomyces occidentalis (Yeast) protein is Hexokinase (HXK).